We begin with the raw amino-acid sequence, 156 residues long: Single-stranded DNA-binding protein 1 (156 aa).

Positions 1–107 (MNETMICAVG…IDAVAIGHDL (107 aa)) constitute an SSB domain. Low complexity predominate over residues 114-124 (FRRTARTEAST). Residues 114 to 156 (FRRTARTEASTSPPRPEPNWEVPAGGTPGEPVPEQRPDPVPVG) are disordered.

In terms of assembly, homotetramer.

This is Single-stranded DNA-binding protein 1 (ssb1) from Streptomyces coelicolor (strain ATCC BAA-471 / A3(2) / M145).